The sequence spans 698 residues: Ion-translocating oxidoreductase complex subunit C (698 aa).

4Fe-4S ferredoxin-type domains lie at T366 to Y397 and K407 to Y436. [4Fe-4S] cluster-binding residues include C377, C380, C383, C387, C416, C419, C422, and C426.

It belongs to the 4Fe4S bacterial-type ferredoxin family. RnfC subfamily. In terms of assembly, the complex is composed of six subunits: RnfA, RnfB, RnfC, RnfD, RnfE and RnfG. [4Fe-4S] cluster is required as a cofactor.

It localises to the cell inner membrane. Functionally, part of a membrane-bound complex that couples electron transfer with translocation of ions across the membrane. The chain is Ion-translocating oxidoreductase complex subunit C from Yersinia pseudotuberculosis serotype O:1b (strain IP 31758).